The sequence spans 138 residues: ATP synthase epsilon chain (138 aa).

The protein belongs to the ATPase epsilon chain family. As to quaternary structure, F-type ATPases have 2 components, CF(1) - the catalytic core - and CF(0) - the membrane proton channel. CF(1) has five subunits: alpha(3), beta(3), gamma(1), delta(1), epsilon(1). CF(0) has three main subunits: a, b and c.

Its subcellular location is the cell inner membrane. Functionally, produces ATP from ADP in the presence of a proton gradient across the membrane. This chain is ATP synthase epsilon chain, found in Cupriavidus pinatubonensis (strain JMP 134 / LMG 1197) (Cupriavidus necator (strain JMP 134)).